The chain runs to 455 residues: Serine--tRNA ligase (455 aa).

252–254 (TAE) contacts L-serine. Residues 283 to 285 (RKE) and Val-299 contribute to the ATP site. Glu-306 is an L-serine binding site. 370 to 373 (EVVS) lines the ATP pocket. Thr-406 contacts L-serine.

This sequence belongs to the class-II aminoacyl-tRNA synthetase family. Type-1 seryl-tRNA synthetase subfamily. Homodimer. The tRNA molecule binds across the dimer.

It localises to the cytoplasm. The enzyme catalyses tRNA(Ser) + L-serine + ATP = L-seryl-tRNA(Ser) + AMP + diphosphate + H(+). It catalyses the reaction tRNA(Sec) + L-serine + ATP = L-seryl-tRNA(Sec) + AMP + diphosphate + H(+). It functions in the pathway aminoacyl-tRNA biosynthesis; selenocysteinyl-tRNA(Sec) biosynthesis; L-seryl-tRNA(Sec) from L-serine and tRNA(Sec): step 1/1. Its function is as follows. Catalyzes the attachment of serine to tRNA(Ser). Is also able to aminoacylate tRNA(Sec) with serine, to form the misacylated tRNA L-seryl-tRNA(Sec), which will be further converted into selenocysteinyl-tRNA(Sec). In Pyrococcus horikoshii (strain ATCC 700860 / DSM 12428 / JCM 9974 / NBRC 100139 / OT-3), this protein is Serine--tRNA ligase.